A 314-amino-acid chain; its full sequence is Fructose-1,6-bisphosphatase class 1 (314 aa).

Residues Glu91, Asp112, Leu114, and Asp115 each coordinate Mg(2+). Residues 115-118, Tyr223, and Lys254 contribute to the substrate site; that span reads DGSS. Glu260 serves as a coordination point for Mg(2+).

It belongs to the FBPase class 1 family. As to quaternary structure, homotetramer. Mg(2+) serves as cofactor.

It localises to the cytoplasm. It carries out the reaction beta-D-fructose 1,6-bisphosphate + H2O = beta-D-fructose 6-phosphate + phosphate. It participates in carbohydrate biosynthesis; gluconeogenesis. The polypeptide is Fructose-1,6-bisphosphatase class 1 (Geobacter metallireducens (strain ATCC 53774 / DSM 7210 / GS-15)).